Here is a 414-residue protein sequence, read N- to C-terminus: Serine/threonine transporter SstT (414 aa).

The Cytoplasmic portion of the chain corresponds to 2–15; it reads TTQRSPGLFRRLAH. A helical membrane pass occupies residues 16 to 36; it reads GSLVKQILVGLVLGILLAWIS. Residues 37 to 45 are Periplasmic-facing; sequence KPAAEAVGL. Residues 46-66 form a helical membrane-spanning segment; the sequence is LGTLFVGALKAVAPILVLMLV. The Cytoplasmic portion of the chain corresponds to 67–83; sequence MASIANHQHGQKTNIRP. A helical transmembrane segment spans residues 84 to 104; that stretch reads ILFLYLLGTFSAALAAVVFSF. The Periplasmic portion of the chain corresponds to 105 to 142; it reads AFPSTLHLSSSAGDISPPSGIVEVMRGLVMSMVSNPID. Residues 143–163 form a helical membrane-spanning segment; sequence ALLKGNYIGILVWAIGLGFAL. Topologically, residues 164–179 are cytoplasmic; it reads RHGNETTKNLVNDLSN. A helical membrane pass occupies residues 180–200; sequence AVTFMVKLVIRFAPIGIFGLV. Over 201 to 217 the chain is Periplasmic; it reads SSTLATTGFSTLWGYAQ. The chain crosses the membrane as a helical span at residues 218 to 238; sequence LLVVLVGCMLLVALVVNPLLV. Over 239 to 299 the chain is Cytoplasmic; sequence WWKIRRNPFP…VSIPLGATIN (61 aa). A helical membrane pass occupies residues 300–320; sequence MAGAAITITVLTLAAVNTLGI. At 321–331 the chain is on the periplasmic side; it reads PVDLPTALLLS. The chain crosses the membrane as a helical span at residues 332–352; the sequence is VVASLCACGASGVAGGSLLLI. The Cytoplasmic portion of the chain corresponds to 353-414; that stretch reads PLACNMFGIS…DRLANSALRN (62 aa).

Belongs to the dicarboxylate/amino acid:cation symporter (DAACS) (TC 2.A.23) family.

The protein resides in the cell inner membrane. It carries out the reaction L-serine(in) + Na(+)(in) = L-serine(out) + Na(+)(out). The catalysed reaction is L-threonine(in) + Na(+)(in) = L-threonine(out) + Na(+)(out). In terms of biological role, involved in the import of serine and threonine into the cell, with the concomitant import of sodium (symport system). The chain is Serine/threonine transporter SstT from Shigella boydii serotype 4 (strain Sb227).